Consider the following 185-residue polypeptide: Ribosome-recycling factor (185 aa).

It belongs to the RRF family.

It is found in the cytoplasm. Functionally, responsible for the release of ribosomes from messenger RNA at the termination of protein biosynthesis. May increase the efficiency of translation by recycling ribosomes from one round of translation to another. In Aeromonas salmonicida (strain A449), this protein is Ribosome-recycling factor.